The sequence spans 1001 residues: MPSTSRAGSLKDPDVAELFFRDDPEKLFSDLREIGHGSFGAVYFAHDARTSEVVAIKKMSYSGKQSNEKWQDIIKEVKFLQRIQHPNSIEYKGCYLREHTAWLVMEYCLGSASDLLEVHKKPLQEIEIAAITHGALQGLAYLHSHNLIHRDIKAGNILLTEPGQVKLADFGSASIVSPANSFVGTPYWMAPEVILAMDEGQYDGKVDVWSLGITCVELAERKPPLFNMNAMSALYHIAQNESPTLQSTEWSDYFRNFVDSCLHKIPQDRPTSDELLKHMFVLRERPETVLIDLIQRTKDAVRELDNLQYRKMKKLLFQEAHNGPAVETQEEDEEQEHGVGRTGTVNSIGSNQSIPSMSISASSQSSSVNSLPDASDDKSELDMMEGDHTVMSNSSVIHLKPEEENYPEEPDPRTRPSEPQSPPQVSRHKSHYRNREHFATIRTASLVTRQIQEHEQDSELREQMSGYKRMRRQHQKQLMALENKLKAEMDEHRLRLDKDLETQRNNFAAEIEKLVKKHQAAMEKELKLMANEEKKFQQHIQAQQKKELNSFLESQKREYKLRKEQLKEELNENQSTPKKEKQEWLSKQKENFQHFQAEEEANLLRRQRQYLELECRRFKRRMLLSRHNLEQDLVREELNKRQTQKDLEHAMLLRQHESMQELEFRHLNTIQRMRCELIKLQHQTELTNQLEYNKRRERELRRKHVMEVRQQPKSLKSKELQIKKQFQDTCKIQTRQYKALRNHLLKSTPKNEHKAVLKRLKEEQTRKLAILAEQYDHSINEMLSTQALRLDEAQEAECQVLKMQLQQELELLNAYQSKIKMQAEAQHEREIRELEQRVSLRRALLEQKIEEEMLALQNERTERIRSLLERQAREIEAFDSESMRLGFSNMILSNLSPEAFSHSYPGASGWSHNPTGGPGPHWGHPMAGPPQAWGHPMQGGPQPWGHPSGSVQGVSRGSTMGVRNSPQALRRTASGGRTEQGMSRSTSVTSQISNGSHMSYT.

Residues 28–281 form the Protein kinase domain; the sequence is FSDLREIGHG…SDELLKHMFV (254 aa). Residues 34-42 and lysine 57 contribute to the ATP site; that span reads IGHGSFGAV. The active-site Proton acceptor is aspartate 151. Disordered regions lie at residues 324-435 and 567-586; these read PAVE…YRNR and KEELNENQSTPKKEKQEWLS. Over residues 350–370 the composition is skewed to low complexity; the sequence is SNQSIPSMSISASSQSSSVNS. Composition is skewed to basic and acidic residues over residues 375 to 388 and 577 to 586; these read SDDKSELDMMEGDH and PKKEKQEWLS. Coiled coils occupy residues 458–651 and 754–877; these read SELR…EHAM and KAVL…EIEA. Positions 911 to 1001 are disordered; that stretch reads SHNPTGGPGP…ISNGSHMSYT (91 aa). Over residues 921–930 the composition is skewed to low complexity; the sequence is HWGHPMAGPP. Composition is skewed to polar residues over residues 949–967 and 975–1001; these read GSVQGVSRGSTMGVRNSPQ and GGRTEQGMSRSTSVTSQISNGSHMSYT.

Belongs to the protein kinase superfamily. STE Ser/Thr protein kinase family. STE20 subfamily.

The protein localises to the cytoplasm. The enzyme catalyses L-seryl-[protein] + ATP = O-phospho-L-seryl-[protein] + ADP + H(+). The catalysed reaction is L-threonyl-[protein] + ATP = O-phospho-L-threonyl-[protein] + ADP + H(+). Its function is as follows. Serine/threonine-protein kinase involved in various processes such as p38/mapk14 stress-activated MAPK cascade, DNA damage response and regulation of cytoskeleton stability. Acts as an activator of the p38/MAPK14 stress-activated MAPK cascade by mediating phosphorylation and subsequent activation of upstream MAP kinase kinases. In response to DNA damage, involved in the G2/M transition DNA damage checkpoint by activating the p38/MAPK14 stress-activated MAPK cascade. This Xenopus laevis (African clawed frog) protein is Serine/threonine-protein kinase TAO1-B (taok1-b).